Consider the following 333-residue polypeptide: COMPASS-like H3K4 histone methylase component WDR5B (333 aa).

WD repeat units lie at residues 1–40 (MPSG…KTLE), 41–80 (GHTA…LIHR), 83–122 (GHSS…ECLK), 126–167 (GHTN…RMIK), 169–207 (HSMP…CLKT), 211–252 (DKSP…KVYT), 253–295 (GHTN…ILQR), and 298–333 (GHTD…KQDA).

As to quaternary structure, unlike WDR5A, does not interact with RBL or TRO.

The chain is COMPASS-like H3K4 histone methylase component WDR5B from Arabidopsis thaliana (Mouse-ear cress).